The primary structure comprises 192 residues: VQ motif-containing protein 22 (192 aa).

Low complexity predominate over residues 24 to 38 (ASTAVTTTTAGDTTS). The disordered stretch occupies residues 24–65 (ASTAVTTTTAGDTTSIDSRLSPETGRVTKPTRRRSRASRRTP). Residues 52–62 (KPTRRRSRASR) are compositionally biased toward basic residues. The short motif at 76–85 (FRAMVQQYTG) is the VQ element. Disordered regions lie at residues 101–135 (FSLT…PQRP) and 163–192 (FGTV…SRLQ). Composition is skewed to low complexity over residues 102 to 114 (SLTS…AGSS) and 175 to 192 (APSS…SRLQ).

It localises to the nucleus. May function as positive regulator of plant growth. The sequence is that of VQ motif-containing protein 22 from Arabidopsis thaliana (Mouse-ear cress).